The sequence spans 786 residues: Protein translocase subunit SecA 1 (786 aa).

Residues Gln-85, 103–107 (GEGKT), and Asp-491 each bind ATP.

The protein belongs to the SecA family. Monomer and homodimer. Part of the essential Sec protein translocation apparatus which comprises SecA, SecYEG and auxiliary proteins SecDF. Other proteins may also be involved.

It localises to the cell membrane. The protein resides in the cytoplasm. The catalysed reaction is ATP + H2O + cellular proteinSide 1 = ADP + phosphate + cellular proteinSide 2.. Functionally, part of the Sec protein translocase complex. Interacts with the SecYEG preprotein conducting channel. Has a central role in coupling the hydrolysis of ATP to the transfer of proteins into and across the cell membrane, serving as an ATP-driven molecular motor driving the stepwise translocation of polypeptide chains across the membrane. This chain is Protein translocase subunit SecA 1, found in Pediococcus pentosaceus (strain ATCC 25745 / CCUG 21536 / LMG 10740 / 183-1w).